Consider the following 104-residue polypeptide: Small ribosomal subunit protein uS10 (104 aa).

It belongs to the universal ribosomal protein uS10 family. Part of the 30S ribosomal subunit.

In terms of biological role, involved in the binding of tRNA to the ribosomes. The sequence is that of Small ribosomal subunit protein uS10 from Thermosynechococcus vestitus (strain NIES-2133 / IAM M-273 / BP-1).